The following is a 200-amino-acid chain: Pyridoxamine 5'-phosphate oxidase homolog (200 aa).

Residues Phe-60, Lys-68, and Asn-125 each contribute to the FMN site.

The protein belongs to the pyridoxamine 5'-phosphate oxidase family. The cofactor is FMN.

The protein localises to the cytoplasm. The protein resides in the nucleus. This chain is Pyridoxamine 5'-phosphate oxidase homolog, found in Saccharomyces cerevisiae (strain ATCC 204508 / S288c) (Baker's yeast).